A 364-amino-acid chain; its full sequence is Fructose-bisphosphate aldolase B (364 aa).

An N-acetylalanine modification is found at Ala-2. Residue Lys-13 is modified to N6-succinyllysine. Residue Ser-36 is modified to Phosphoserine. The residue at position 39 (Thr-39) is a Phosphothreonine. Arg-43 provides a ligand contact to beta-D-fructose 1,6-bisphosphate. Thr-119 is modified (phosphothreonine). Lys-121 is modified (N6-succinyllysine). Ser-132 is subject to Phosphoserine. Glu-188 functions as the Proton acceptor in the catalytic mechanism. Residue Lys-230 is the Schiff-base intermediate with dihydroxyacetone-P of the active site. Residues Ser-272, Ser-276, Ser-299, and Ser-301 each carry the phosphoserine modification. 272–274 (SGG) serves as a coordination point for beta-D-fructose 1,6-bisphosphate. Arg-304 is a beta-D-fructose 1,6-bisphosphate binding site. Ser-309 bears the Phosphoserine mark. Lys-317 is modified (N6-succinyllysine).

Belongs to the class I fructose-bisphosphate aldolase family. In terms of assembly, homotetramer. Interacts with BBS1, BBS2, BBS4 and BBS7. Forms a ternary complex with G6PD and TP53; this interaction is direct.

The protein localises to the cytoplasm. It localises to the cytosol. The protein resides in the cytoskeleton. It is found in the microtubule organizing center. Its subcellular location is the centrosome. The protein localises to the centriolar satellite. The enzyme catalyses beta-D-fructose 1,6-bisphosphate = D-glyceraldehyde 3-phosphate + dihydroxyacetone phosphate. It catalyses the reaction beta-D-fructose 1-phosphate = D-glyceraldehyde + dihydroxyacetone phosphate. Its pathway is carbohydrate degradation; glycolysis; D-glyceraldehyde 3-phosphate and glycerone phosphate from D-glucose: step 4/4. It functions in the pathway carbohydrate biosynthesis; gluconeogenesis. The protein operates within carbohydrate metabolism; fructose metabolism. Its function is as follows. Catalyzes the aldol cleavage of fructose 1,6-biphosphate to form two triosephosphates dihydroxyacetone phosphate and D-glyceraldehyde 3-phosphate in glycolysis as well as the reverse stereospecific aldol addition reaction in gluconeogenesis. In fructolysis, metabolizes fructose 1-phosphate derived from the phosphorylation of dietary fructose by fructokinase into dihydroxyacetone phosphate and D-glyceraldehyde. Acts as an adapter independently of its enzymatic activity, exerts a tumor suppressor role by stabilizing the ternary complex with G6PD and TP53 to inhibit G6PD activity and keep oxidative pentose phosphate metabolism in check. The chain is Fructose-bisphosphate aldolase B (ALDOB) from Bos taurus (Bovine).